A 741-amino-acid chain; its full sequence is NAD(P)H-quinone oxidoreductase subunit 5, chloroplastic (741 aa).

The next 16 membrane-spanning stretches (helical) occupy residues 9-29 (WIIPFLPLPVPMLIGLGLLLF), 40-60 (WAFQSVLLLSIVMIFSMNLSI), 89-109 (IDPLTSIMSILITTVGIMVLI), 125-145 (FAYMSFFSTSMLGLVTSSNLI), 147-167 (IYIFWELVGMCSYLLIGFWFT), 185-205 (GDFGLLLGILGFYWITGSFEF), 219-239 (NEVNFLFVTLCAVLLFAGAIA), 258-278 (TPISALIHAATMVAAGIFLVA), 283-303 (LFIVIPHIMNFISLIGIITVF), 327-347 (LGYMMLALGMGSYRSALFHLI), 354-374 (ALLFLGSGSVIHSMETLVGYC), 396-416 (NSFLLGTLSLCGIPPLACFWS), 425-445 (WLYSPIFAIIAWSTAGLTAFY), 549-569 (LFPILILILFTLFVGFLGIPF), 605-625 (VFSVSIASFGIFIAFFLYKPV), and 718-738 (ISSYLFFYFSYVSIFLLIYYF).

It belongs to the complex I subunit 5 family. As to quaternary structure, NDH is composed of at least 16 different subunits, 5 of which are encoded in the nucleus.

It is found in the plastid. The protein localises to the chloroplast thylakoid membrane. It catalyses the reaction a plastoquinone + NADH + (n+1) H(+)(in) = a plastoquinol + NAD(+) + n H(+)(out). The enzyme catalyses a plastoquinone + NADPH + (n+1) H(+)(in) = a plastoquinol + NADP(+) + n H(+)(out). Functionally, NDH shuttles electrons from NAD(P)H:plastoquinone, via FMN and iron-sulfur (Fe-S) centers, to quinones in the photosynthetic chain and possibly in a chloroplast respiratory chain. The immediate electron acceptor for the enzyme in this species is believed to be plastoquinone. Couples the redox reaction to proton translocation, and thus conserves the redox energy in a proton gradient. The chain is NAD(P)H-quinone oxidoreductase subunit 5, chloroplastic (ndhF) from Athroisma gracile.